Here is a 318-residue protein sequence, read N- to C-terminus: MSRPIILDCDPGHDDAIALILALAHPELNPLAVTTSAGNQTPDKTLNNALRILTLLNRSDIPVAGGAVKPLSRELMIADNVHGETGLDGPALPAPSFQPQAVNAVELMAEKIRQSDKPVTLVPTGPLTNIALLLASHGELHAKIERIVLMGGAAGVGNWTPAAEFNIFVDPEAADIVFKSGIPITMCGLDVTHQAQIMDEDIERIRAIPNPVAKCVAELLDFFMIYHRDPKWGFVGAPLHDPCTIAWLLNPALFDAQDCWVGIETQSELTLGMTVVDRYQLTGKPTNATVLFGIDRQGFVDLLVDSLAVYTPTYLNRR.

Residue H240 is part of the active site.

It belongs to the IUNH family. RihA subfamily.

Hydrolyzes cytidine or uridine to ribose and cytosine or uracil, respectively. The protein is Pyrimidine-specific ribonucleoside hydrolase RihA of Shewanella sp. (strain MR-4).